We begin with the raw amino-acid sequence, 119 residues long: MRQNTILENVTSAQLRTDIPAFRAGDTVKVYAKIVEGSRERVQLFEGVVIKRKGAGIQATYTVRKISSGVGVERTFPLHSPRVEKIEVTRFGQVRRAKLYYLRALQGKAARIKERRRDV.

Belongs to the bacterial ribosomal protein bL19 family.

Functionally, this protein is located at the 30S-50S ribosomal subunit interface and may play a role in the structure and function of the aminoacyl-tRNA binding site. This chain is Large ribosomal subunit protein bL19, found in Leuconostoc mesenteroides subsp. mesenteroides (strain ATCC 8293 / DSM 20343 / BCRC 11652 / CCM 1803 / JCM 6124 / NCDO 523 / NBRC 100496 / NCIMB 8023 / NCTC 12954 / NRRL B-1118 / 37Y).